A 254-amino-acid polypeptide reads, in one-letter code: Nickel import ATP-binding protein NikD (254 aa).

The region spanning 2–241 (PQQIELRNIA…PKHTVTRSLV (240 aa)) is the ABC transporter domain. Position 36–43 (36–43 (GGSGSGKS)) interacts with ATP.

It belongs to the ABC transporter superfamily. Nickel importer (TC 3.A.1.5.3) family. In terms of assembly, the complex is composed of two ATP-binding proteins (NikD and NikE), two transmembrane proteins (NikB and NikC) and a solute-binding protein (NikA).

Its subcellular location is the cell inner membrane. It catalyses the reaction Ni(2+)(out) + ATP + H2O = Ni(2+)(in) + ADP + phosphate + H(+). Part of the ABC transporter complex NikABCDE involved in nickel import. Responsible for energy coupling to the transport system. The chain is Nickel import ATP-binding protein NikD from Shigella boydii serotype 4 (strain Sb227).